Consider the following 98-residue polypeptide: NADH-ubiquinone oxidoreductase chain 4L (98 aa).

Transmembrane regions (helical) follow at residues 1–21, 25–45, and 59–81; these read MSLAHINIFLAFTVSLVGLLM, HLMSSLLCLEGMMLSLFVMAT, and MPIILLVFAACERALGLSLLVMV.

This sequence belongs to the complex I subunit 4L family. As to quaternary structure, core subunit of respiratory chain NADH dehydrogenase (Complex I) which is composed of 45 different subunits.

The protein resides in the mitochondrion inner membrane. It carries out the reaction a ubiquinone + NADH + 5 H(+)(in) = a ubiquinol + NAD(+) + 4 H(+)(out). Its function is as follows. Core subunit of the mitochondrial membrane respiratory chain NADH dehydrogenase (Complex I) which catalyzes electron transfer from NADH through the respiratory chain, using ubiquinone as an electron acceptor. Part of the enzyme membrane arm which is embedded in the lipid bilayer and involved in proton translocation. This is NADH-ubiquinone oxidoreductase chain 4L (MT-ND4L) from Equus asinus (Donkey).